The primary structure comprises 269 residues: Shikimate dehydrogenase (NADP(+)) (269 aa).

Shikimate contacts are provided by residues 17–19 (SKS) and threonine 64. Residue lysine 68 is the Proton acceptor of the active site. NADP(+) is bound at residue aspartate 80. Shikimate contacts are provided by asparagine 89 and aspartate 105. Residues 130-134 (GAGGA), 154-159 (NRTRAK), and methionine 213 each bind NADP(+). Tyrosine 215 lines the shikimate pocket. Residue glycine 237 coordinates NADP(+).

Belongs to the shikimate dehydrogenase family. As to quaternary structure, homodimer.

The enzyme catalyses shikimate + NADP(+) = 3-dehydroshikimate + NADPH + H(+). It functions in the pathway metabolic intermediate biosynthesis; chorismate biosynthesis; chorismate from D-erythrose 4-phosphate and phosphoenolpyruvate: step 4/7. Involved in the biosynthesis of the chorismate, which leads to the biosynthesis of aromatic amino acids. Catalyzes the reversible NADPH linked reduction of 3-dehydroshikimate (DHSA) to yield shikimate (SA). This is Shikimate dehydrogenase (NADP(+)) from Neisseria meningitidis serogroup C (strain 053442).